Here is a 1228-residue protein sequence, read N- to C-terminus: Apical endosomal glycoprotein (1228 aa).

A signal peptide spans 1 to 21 (MCLPSHLLSTWVLFMAAQSLG). The Extracellular segment spans residues 23 to 1159 (TWLPNHCRSP…GEVAAPVSVP (1137 aa)). The LDL-receptor class A 1; truncated domain maps to 28–49 (HCRSPIKAVCNFVCDCGDCSDE). The region spanning 65-223 (FTCNFEQDSC…DDVEFRDCGL (159 aa)) is the MAM 1 domain. Asn204 carries N-linked (GlcNAc...) asparagine glycosylation. Residues 229-267 (RCPLGHHHCQNKACVEPHQLCDGEDNCGDRSDEDPLICS) form the LDL-receptor class A 2 domain. 3 cysteine pairs are disulfide-bonded: Cys230-Cys242, Cys237-Cys255, and Cys249-Cys266. The MAM 2 domain maps to 270–426 (MATDFETGLG…DLIMSSHCML (157 aa)). Asn290 and Asn340 each carry an N-linked (GlcNAc...) asparagine glycan. An LDL-receptor class A 3 domain is found at 457 to 492 (TCEPGHLSCGDLCVPPEQLCDFQKHCAEGEDEHKCG). 3 disulfides stabilise this stretch: Cys458–Cys469, Cys465–Cys482, and Cys476–Cys491. MAM domains follow at residues 492–649 (GTTD…DCNP), 659–815 (LSCN…PCWA), 817–975 (KSCS…PCPQ), and 977–1144 (GSCD…QCKQ). Asn641 carries an N-linked (GlcNAc...) asparagine glycan. Asn841 is a glycosylation site (N-linked (GlcNAc...) asparagine). A helical transmembrane segment spans residues 1160–1180 (VAVGGALLFFMFLVLMGLGGW). Residues 1181 to 1228 (HWLQKQHCPGQRSTDAAASGFANILFNADHVTLPESITSNPQSPPDLA) lie on the Cytoplasmic side of the membrane.

The protein localises to the membrane. Probably involved in the sorting and selective transport of receptors and ligands across polarized epithelia. This chain is Apical endosomal glycoprotein, found in Mus musculus (Mouse).